A 322-amino-acid polypeptide reads, in one-letter code: Arginase-1 (322 aa).

Positions M1–G27 are disordered. Position 7 is a phosphoserine (S7). K17 is modified (N6-succinyllysine). S72 carries the phosphoserine modification. K75 is modified (N6-succinyllysine). Mn(2+) contacts are provided by H101, D124, H126, and D128. Substrate is bound by residues H126–N130 and T137–N139. Phosphoserine is present on S163. D183 is a binding site for substrate. Phosphoserine is present on S217. Residues D232 and D234 each contribute to the Mn(2+) site. Residues T246 and E277 each coordinate substrate.

It belongs to the arginase family. In terms of assembly, homotrimer. Interacts with CMTM6. Mn(2+) is required as a cofactor.

It localises to the cytoplasm. The enzyme catalyses L-arginine + H2O = urea + L-ornithine. It participates in nitrogen metabolism; urea cycle; L-ornithine and urea from L-arginine: step 1/1. The polypeptide is Arginase-1 (ARG1) (Sus scrofa (Pig)).